Reading from the N-terminus, the 182-residue chain is ATP-dependent protease subunit HslV (182 aa).

Thr12 is an active-site residue. Na(+) contacts are provided by Ala167, Cys170, and Thr173.

This sequence belongs to the peptidase T1B family. HslV subfamily. In terms of assembly, a double ring-shaped homohexamer of HslV is capped on each side by a ring-shaped HslU homohexamer. The assembly of the HslU/HslV complex is dependent on binding of ATP.

The protein localises to the cytoplasm. It catalyses the reaction ATP-dependent cleavage of peptide bonds with broad specificity.. With respect to regulation, allosterically activated by HslU binding. Protease subunit of a proteasome-like degradation complex believed to be a general protein degrading machinery. This Pelodictyon phaeoclathratiforme (strain DSM 5477 / BU-1) protein is ATP-dependent protease subunit HslV.